We begin with the raw amino-acid sequence, 23 residues long: Potassium channel toxin kappa-KTx 2.3 (23 aa).

Cystine bridges form between Cys4/Cys22 and Cys8/Cys18.

This sequence belongs to the short scorpion toxin superfamily. Potassium channel inhibitor kappa-KTx family. Kappa-KTx 2 subfamily. Expressed by the venom gland.

It localises to the secreted. Functionally, decreases the amplitude of the potassium current of the rat channels Kv1.1/KCNA1 by 33% and Kv1.2/KCNA2 by 8% as well as human Kv1.3/KCNA3 by 70%. The sequence is that of Potassium channel toxin kappa-KTx 2.3 from Opisthacanthus madagascariensis (Scorpion).